Consider the following 634-residue polypeptide: MYDLLKTIDDPADLRRLDRRQLQPLADELRAFVLDSVSKTGGHLSSNLGTVELTIALHYVFNTPDDRIVWDVGHQTYPHKILTGRRDGMKTLRQFDGISGFPRRSESEYDTFGTAHSSTSISAALGMAIGSKLNGDDRFSIAVIGDGAMTAGMAFEAMNNAGVSEDAKLLVILNDNDMSISPPVGALNRHLARLMSGRFYAAARAGVERVLSVAPPVLELARKLEEHAKGMVVPATLFEEFGFNYIGPIDGHDLDSLIPTLQNIKELRGPQFLHVVTKKGQGYKLAEADPVLYHGPGKFNPAEGIKPSTTPAKKTYTQVFGEWLCDAAELDARVVGITPAMREGSGMVEFEKRFPERYYDVGIAEQHAVTFAGGLATEGLKPVVAIYSTFLQRAYDQLIHDVALQNLPVVFAIDRAGLVGADGATHAGAYDLAFLRCIPNMTVMAASDENECRQMLHTALQQPNPTAVRYPRGAGTGVATVKAFTEIPLGKGEVRRRTSQPDGKRIAILAFGTMVAPSLAAADALDATVANMRFVKPIDAELVQALARTHDYLVTVEEGCVMGGAGSACVEAMMESGVVRPVLQLGLPDRFVDHGDPAKLLSLCGLDGDGIAKSIRERFLSHAADVASPAKRVA.

Residues His-74 and 115 to 117 (AHS) each bind thiamine diphosphate. Asp-146 is a Mg(2+) binding site. Thiamine diphosphate contacts are provided by residues 147–148 (GA), Asn-176, Tyr-283, and Glu-365. Asn-176 lines the Mg(2+) pocket.

This sequence belongs to the transketolase family. DXPS subfamily. Homodimer. It depends on Mg(2+) as a cofactor. Thiamine diphosphate is required as a cofactor.

It catalyses the reaction D-glyceraldehyde 3-phosphate + pyruvate + H(+) = 1-deoxy-D-xylulose 5-phosphate + CO2. The protein operates within metabolic intermediate biosynthesis; 1-deoxy-D-xylulose 5-phosphate biosynthesis; 1-deoxy-D-xylulose 5-phosphate from D-glyceraldehyde 3-phosphate and pyruvate: step 1/1. Catalyzes the acyloin condensation reaction between C atoms 2 and 3 of pyruvate and glyceraldehyde 3-phosphate to yield 1-deoxy-D-xylulose-5-phosphate (DXP). This Burkholderia pseudomallei (strain 668) protein is 1-deoxy-D-xylulose-5-phosphate synthase.